The following is a 957-amino-acid chain: Mediator of RNA polymerase II transcription subunit 16 (957 aa).

Residues 855 to 883 form a disordered region; it reads YTEVDAAPSGKTNAQGPPQQPQPQQQRRR.

The protein belongs to the Mediator complex subunit 16 family. Component of the Mediator complex.

It localises to the nucleus. In terms of biological role, component of the Mediator complex, a coactivator involved in the regulated transcription of nearly all RNA polymerase II-dependent genes. Mediator functions as a bridge to convey information from gene-specific regulatory proteins to the basal RNA polymerase II transcription machinery. Mediator is recruited to promoters by direct interactions with regulatory proteins and serves as a scaffold for the assembly of a functional preinitiation complex with RNA polymerase II and the general transcription factors. In Aspergillus clavatus (strain ATCC 1007 / CBS 513.65 / DSM 816 / NCTC 3887 / NRRL 1 / QM 1276 / 107), this protein is Mediator of RNA polymerase II transcription subunit 16 (sin4).